The primary structure comprises 147 residues: Large ribosomal subunit protein uL16 (147 aa).

The disordered stretch occupies residues 1–20; that stretch reads MLMPKKVKHRKVQRGRMKGK.

The protein belongs to the universal ribosomal protein uL16 family. As to quaternary structure, part of the 50S ribosomal subunit.

Functionally, binds 23S rRNA and is also seen to make contacts with the A and possibly P site tRNAs. In Clostridium kluyveri (strain ATCC 8527 / DSM 555 / NBRC 12016 / NCIMB 10680 / K1), this protein is Large ribosomal subunit protein uL16.